Consider the following 351-residue polypeptide: Prostaglandin reductase 2 (351 aa).

99-100 (FY) is a substrate binding site. NADP(+) contacts are provided by residues 165 to 168 (GACG), Lys192, Tyr208, Asn231, 253 to 259 (CGQISQY), 287 to 289 (FMV), and Asn337. 288-290 (MVL) is a binding site for substrate.

It belongs to the NADP-dependent oxidoreductase L4BD family. In terms of assembly, monomer.

The protein resides in the cytoplasm. It carries out the reaction 13,14-dihydro-15-oxo-prostaglandin E2 + NAD(+) = 15-oxoprostaglandin E2 + NADH + H(+). The enzyme catalyses 13,14-dihydro-15-oxo-prostaglandin E2 + NADP(+) = 15-oxoprostaglandin E2 + NADPH + H(+). It catalyses the reaction 13,14-dihydro-15-oxo-PGF2alpha + NADP(+) = 15-oxoprostaglandin F2alpha + NADPH + H(+). The catalysed reaction is 13,14-dihydro-15-oxo-prostaglandin E1 + NADP(+) = 15-oxoprostaglandin E1 + NADPH + H(+). It carries out the reaction 13,14-dihydro-15-oxo-prostaglandin F1alpha + NADP(+) = 15-oxoprostaglandin F1alpha + NADPH + H(+). Its function is as follows. Functions as 15-oxo-prostaglandin 13-reductase and acts on 15-keto-PGE1, 15-keto-PGE2, 15-keto-PGE1-alpha and 15-keto-PGE2-alpha with highest activity towards 15-keto-PGE2. Overexpression represses transcriptional activity of PPARG and inhibits adipocyte differentiation. This is Prostaglandin reductase 2 from Rattus norvegicus (Rat).